The primary structure comprises 475 residues: Bifunctional protein HldE (475 aa).

Residues 1–318 form a ribokinase region; it reads MMQYSLKFNQ…ENAIHHREET (318 aa). 195-198 provides a ligand contact to ATP; the sequence is NMAE. D264 is an active-site residue. The tract at residues 344-475 is cytidylyltransferase; the sequence is MTNGCFDILH…DVIKKIQAIR (132 aa).

In the N-terminal section; belongs to the carbohydrate kinase PfkB family. This sequence in the C-terminal section; belongs to the cytidylyltransferase family. Homodimer.

The catalysed reaction is D-glycero-beta-D-manno-heptose 7-phosphate + ATP = D-glycero-beta-D-manno-heptose 1,7-bisphosphate + ADP + H(+). It catalyses the reaction D-glycero-beta-D-manno-heptose 1-phosphate + ATP + H(+) = ADP-D-glycero-beta-D-manno-heptose + diphosphate. It participates in nucleotide-sugar biosynthesis; ADP-L-glycero-beta-D-manno-heptose biosynthesis; ADP-L-glycero-beta-D-manno-heptose from D-glycero-beta-D-manno-heptose 7-phosphate: step 1/4. It functions in the pathway nucleotide-sugar biosynthesis; ADP-L-glycero-beta-D-manno-heptose biosynthesis; ADP-L-glycero-beta-D-manno-heptose from D-glycero-beta-D-manno-heptose 7-phosphate: step 3/4. The protein operates within bacterial outer membrane biogenesis; LOS core biosynthesis. Functionally, catalyzes the phosphorylation of D-glycero-D-manno-heptose 7-phosphate at the C-1 position to selectively form D-glycero-beta-D-manno-heptose-1,7-bisphosphate. Its function is as follows. Catalyzes the ADP transfer from ATP to D-glycero-beta-D-manno-heptose 1-phosphate, yielding ADP-D-glycero-beta-D-manno-heptose. This Haemophilus ducreyi (strain 35000HP / ATCC 700724) protein is Bifunctional protein HldE.